Here is a 25-residue protein sequence, read N- to C-terminus: M-poneritoxin-Nc2a (25 aa).

This sequence belongs to the ponericin-L family. Expressed by the venom gland.

The protein resides in the secreted. It is found in the target cell membrane. Membrane-perturbating peptide with multiple activities. It is insecticidal, since it induces reversible paralysis in insects (L.cuprina) after 1 hour, but fails to kill them. It shows moderate antibacterial activity against some Gram-positive and Gram-negative bacteria. It is also antiparasitic, since it moderately inhibits the larval development of the major pathogenic nematode of ruminants (H.contortus, IC(50)=23.2 uM), but fails to reduce the motility of adult males of the other nematode B.malayi. It also shows moderate cytotoxic activity against HEK293 cells (EC(50)=48-57 uM) but does not induce hemolysis in human erythrocytes. It also causes a moderate increase in intracellular calcium concentration on neuronal and epithelial cell lines, which supports a non-specific membrane perturbation mechanism of action. In Neoponera commutata (Large hunting ant), this protein is M-poneritoxin-Nc2a.